The chain runs to 201 residues: 3-isopropylmalate dehydratase small subunit (201 aa).

Belongs to the LeuD family. LeuD type 1 subfamily. In terms of assembly, heterodimer of LeuC and LeuD.

It catalyses the reaction (2R,3S)-3-isopropylmalate = (2S)-2-isopropylmalate. Its pathway is amino-acid biosynthesis; L-leucine biosynthesis; L-leucine from 3-methyl-2-oxobutanoate: step 2/4. Functionally, catalyzes the isomerization between 2-isopropylmalate and 3-isopropylmalate, via the formation of 2-isopropylmaleate. The protein is 3-isopropylmalate dehydratase small subunit of Cronobacter sakazakii (strain ATCC BAA-894) (Enterobacter sakazakii).